The primary structure comprises 1687 residues: Zinc finger protein 142 (1687 aa).

2 disordered regions span residues 1–23 and 83–150; these read MTDPLLDSQPASSTGEMDGLCPE and TLTP…RLEG. The span at 125-140 shows a compositional bias: basic and acidic residues; that stretch reads KEEKSDTQKDSQKAVD. A Phosphoserine modification is found at Ser154. 3 C2H2-type zinc fingers span residues 163–185, 219–242, and 253–275; these read HMCPECKRCFKKRTHLVEHLHLH, HHCPLCHYSAVERNALNRHMASMH, and YACPVCREEFRLSQALKEHLKSH. A C2H2-type 4; atypical zinc finger spans residues 286-311; sequence LRCFQEGCSYAAPDRKAFIKHLKETH. 10 C2H2-type zinc fingers span residues 316–340, 343–366, 372–395, 401–423, 429–451, 457–479, 485–507, 512–536, 544–567, and 573–596; these read VECRHHSCPMLFATAEAMEAHHKSH, FHCPHCDFACSNKHLFRKHKKQGH, LRCTFCPFATFNPVAYQDHVGKMH, HQCPECNFATAHKRVLIRHMLLH, HKCELCDFTCRDVSYLSKHMLTH, YMCTECGYVTKWKHYLRVHMRKH, YQCNQCSYRCHRADQLSSHKLRH, LMCEVCAFACKRKYELQKHMASQHH, YPCHYCSYQSRHKQAVLSHENCKH, and FHCALCDYRTFSNTTLLFHKRKAH. Lys594 is covalently cross-linked (Glycyl lysine isopeptide (Lys-Gly) (interchain with G-Cter in SUMO2)). 5 disordered regions span residues 613–690, 704–798, 897–935, 947–1014, and 1052–1092; these read EPEG…EVEE, LESV…PPLP, KGLPRPDSPIPLQPVLPGTQASEDTESGKPPPASQEAEL, REPE…SPTE, and GRGG…GDGD. The segment covering 725 to 739 has biased composition (low complexity); the sequence is PLGLEGPDGLEGPEL. The span at 1061-1075 shows a compositional bias: polar residues; that stretch reads TPQTQPDVSPLSNGD. Over residues 1082–1092 the composition is skewed to low complexity; it reads GSTESSSGDGD. 15 consecutive C2H2-type zinc fingers follow at residues 1135 to 1158, 1171 to 1194, 1200 to 1222, 1228 to 1251, 1257 to 1280, 1286 to 1309, 1328 to 1351, 1354 to 1377, 1380 to 1403, 1424 to 1446, 1452 to 1474, 1480 to 1502, 1508 to 1530, 1536 to 1559, and 1565 to 1587; these read LHCSLCPFTAPAATALRLHQKRRH, LQCGDCGFTCKQSRCMQQHRRLKH, HQCPFCDFSTTRRYRLEAHQSRH, IPCSSCPQTFGTNSKLRLHRLRVH, HFCPLCDYSGYLRHDITRHVNSCH, FACSQCEAQFSSETALKQHALRRH, LHCSRCGLLCPSPASLRGHTRKQH, LECGACQEAFPSRLALDEHRRQQH, HRCQLCDFAARERVGLVKHYLEQH, LHCPFCDFTCRHQLVLDHHVKGH, YKCTDCAYSTKNRQKITWHSRIH, YHCHLCPYACADPSRLKYHMRIH, YLCPECGYKCKWVNQLKYHMTKH, YQCPECEYCTNRADALRVHQETRH, and FMCEQCGKAFKTRFLLRTHLRKH. Lys1193 participates in a covalent cross-link: Glycyl lysine isopeptide (Lys-Gly) (interchain with G-Cter in SUMO2). A Glycyl lysine isopeptide (Lys-Gly) (interchain with G-Cter in SUMO2) cross-link involves residue Lys1242. Residue Lys1591 forms a Glycyl lysine isopeptide (Lys-Gly) (interchain with G-Cter in SUMO2) linkage. C2H2-type zinc fingers lie at residues 1593-1615 and 1621-1643; these read YVCNVCHRAFRWAAGLRHHALTH and FFCRLCNYKAKQKFQVVKHVRRH. The segment at 1638–1687 is disordered; sequence KHVRRHHPDQADPNQGVGKDPTTPTVHLHDVQLEDPSPPAPAAPHTGPEG.

This sequence belongs to the krueppel C2H2-type zinc-finger protein family.

It localises to the nucleus. In terms of biological role, may be involved in transcriptional regulation. In Homo sapiens (Human), this protein is Zinc finger protein 142.